Consider the following 337-residue polypeptide: Ferredoxin--NADP reductase (337 aa).

7 residues coordinate FAD: Asp35, Gln43, Tyr48, Ala88, Phe122, Asp289, and Thr330.

Belongs to the ferredoxin--NADP reductase type 2 family. Homodimer. Requires FAD as cofactor.

The catalysed reaction is 2 reduced [2Fe-2S]-[ferredoxin] + NADP(+) + H(+) = 2 oxidized [2Fe-2S]-[ferredoxin] + NADPH. The protein is Ferredoxin--NADP reductase of Ehrlichia ruminantium (strain Gardel).